We begin with the raw amino-acid sequence, 62 residues long: Amolopin-P2 (62 aa).

A signal peptide spans 1-22 (MFTLKKSLLLLFFLGTISLSLC). Residues 23–44 (EQERGADEEENGGEVTEQEVKR) constitute a propeptide that is removed on maturation.

This sequence belongs to the frog skin active peptide (FSAP) family. Amolopin subfamily. As to expression, expressed by the skin glands.

The protein resides in the secreted. In terms of biological role, antimicrobial peptide with activity against Gram-positive bacteria. Has been tested against S.aureus (MIC=37.5 ug/mL), against B.pumilus (MIC=75.0 ug/mL), B.cereus (no activity detected). Does not show activity against Gram-negative bacteria (E.coli, B.dysenteriae, A.calcoaceticus, P.aeruginosa) and fungi (C.albicans). Does not show hemolytic activity against rabbit erythrocytes. The polypeptide is Amolopin-P2 (Amolops loloensis (Lolokou Sucker Frog)).